A 258-amino-acid chain; its full sequence is MMFKNFPFFKGKKDTSFDHLVEEVKKGYIPEHIAIIMDGNGRWAKRRAMPRIAGHHEGMQVVKKITKFASKLNVKVLTLYAFSTENWKRPKKEVDYLMQLPEEFLGTFLPELIEENVQVRVIGQQDRLPTHTRRAMEKAMEETKENTGLILNFALNYGSRDEIVSAVQHMMKDSEEGKVRVEDVSEEMLSSYLMTSSLPDPELLIRTSGELRISNFMLWQIAYSEFWFTDVYWPDFTEEHLLNAITDFQHRGRRFGGV.

Residue Asp-38 is part of the active site. Asp-38 is a Mg(2+) binding site. Residues 39–42 (GNGR), Trp-43, Arg-51, His-55, and 83–85 (STE) contribute to the substrate site. Residue Asn-86 is the Proton acceptor of the active site. Residues Trp-87, Arg-89, Arg-206, and 212 to 214 (RIS) contribute to the substrate site. Mg(2+) is bound at residue Glu-225.

Belongs to the UPP synthase family. In terms of assembly, homodimer. Mg(2+) is required as a cofactor.

Catalyzes the condensation of isopentenyl diphosphate (IPP) with allylic pyrophosphates generating different type of terpenoids. The polypeptide is Isoprenyl transferase (Bacillus anthracis).